The sequence spans 481 residues: GTPase Obg (481 aa).

The Obg domain occupies threonine 2–valine 159. An OBG-type G domain is found at alanine 160–alanine 330. Residues glycine 166–serine 173, phenylalanine 191–valine 195, aspartate 212–glycine 215, asparagine 282–aspartate 285, and serine 311–alanine 313 contribute to the GTP site. Mg(2+) contacts are provided by serine 173 and threonine 193. The 79-residue stretch at proline 348 to proline 426 folds into the OCT domain. Residues aspartate 440–glutamate 481 form a disordered region. The segment covering glutamate 469 to glutamate 481 has biased composition (acidic residues).

It belongs to the TRAFAC class OBG-HflX-like GTPase superfamily. OBG GTPase family. As to quaternary structure, monomer. Mg(2+) serves as cofactor.

It is found in the cytoplasm. Functionally, an essential GTPase which binds GTP, GDP and possibly (p)ppGpp with moderate affinity, with high nucleotide exchange rates and a fairly low GTP hydrolysis rate. Plays a role in control of the cell cycle, stress response, ribosome biogenesis and in those bacteria that undergo differentiation, in morphogenesis control. In Salinispora arenicola (strain CNS-205), this protein is GTPase Obg.